The primary structure comprises 622 residues: Zinc finger protein ZIC 5 (622 aa).

Disordered regions lie at residues 50 to 171 (MHLH…KGHS), 190 to 223 (HGAP…SASG), 232 to 251 (GSAL…GHPL), and 321 to 349 (PGPH…HLPG). Residues 126–151 (APPPPAPPLPPSQSSSPPPPPPPPPA) show a composition bias toward pro residues. The span at 329–340 (APPPAPPPAPAP) shows a compositional bias: pro residues. Residues 422-444 (EDCPREGKPFKAKYKLINHIRVH) form a C2H2-type 1; degenerate zinc finger. 3 C2H2-type zinc fingers span residues 450–474 (FPCP…KRTH), 480–504 (FKCE…SHVH), and 510–534 (YYCK…MKIH). 2 disordered regions span residues 531–573 (MKIH…STLS) and 590–622 (APSH…RTIH). Phosphoserine occurs at positions 537, 541, and 559. Over residues 595 to 604 (HTPSSNGTTS) the composition is skewed to polar residues.

It belongs to the GLI C2H2-type zinc-finger protein family.

Its subcellular location is the nucleus. Its function is as follows. Essential for neural crest development, converting cells from an epidermal fate to a neural crest cell fate. Binds to DNA. The protein is Zinc finger protein ZIC 5 (Zic5) of Mus musculus (Mouse).